The following is a 1048-amino-acid chain: PH and SEC7 domain-containing protein 3 (1048 aa).

The segment covering 36–45 (SEGKAPDTSD) has biased composition (basic and acidic residues). The disordered stretch occupies residues 36 to 57 (SEGKAPDTSDHGGSTLLPPNVT). Ser76 bears the Phosphoserine mark. Disordered stretches follow at residues 104-126 (LDSV…LKEQ), 310-342 (GGDK…KVPR), 364-383 (SWKA…SPVR), and 395-434 (QENK…PGYT). Basic and acidic residues predominate over residues 311 to 321 (GDKRETQHPID). Basic and acidic residues predominate over residues 397 to 423 (NKQHLEKTPKPERDRERISEQEEHVKG). The region spanning 534 to 734 (TKGTPEIAFW…KALYNSIKNE (201 aa)) is the SEC7 domain. Over residues 741–758 (DDEEKKKSPSESTEEKAN) the composition is skewed to basic and acidic residues. Residues 741 to 769 (DDEEKKKSPSESTEEKANGTHPKTISRIG) are disordered. Residue Ser770 is modified to Phosphoserine. The region spanning 785–898 (AVYKSGFLAR…WINKINCVAA (114 aa)) is the PH domain. Residues 922–952 (ATTTKLSQEEQLKSHESKLKQITTELAEHRS) adopt a coiled-coil conformation. Residues 999-1048 (DESEAAGLKKSHSSPSLNPDTSPITAKVKRNVSERKDHRPETPSIKQKVT) form a disordered region. Residues Ser1009, Ser1011, Ser1012, Ser1014, and Ser1020 each carry the phosphoserine modification. Positions 1011-1022 (SSPSLNPDTSPI) are enriched in polar residues. Positions 1029-1039 (NVSERKDHRPE) are enriched in basic and acidic residues.

As to expression, isoform 2 is expressed in epididymis (at protein level).

It localises to the cell membrane. Its subcellular location is the cell projection. The protein resides in the ruffle membrane. It is found in the postsynaptic density. In terms of biological role, guanine nucleotide exchange factor for ARF6. This Homo sapiens (Human) protein is PH and SEC7 domain-containing protein 3 (PSD3).